The chain runs to 140 residues: Methylglyoxal synthase (140 aa).

Positions 1–140 (MKIALIAHDR…HDQDSNPINL (140 aa)) constitute an MGS-like domain. Substrate is bound by residues His8, Lys12, 34 to 37 (TGTT), and 54 to 55 (SG). The Proton donor/acceptor role is filled by Asp60. His87 contributes to the substrate binding site.

The protein belongs to the methylglyoxal synthase family.

The catalysed reaction is dihydroxyacetone phosphate = methylglyoxal + phosphate. Catalyzes the formation of methylglyoxal from dihydroxyacetone phosphate. This Latilactobacillus sakei subsp. sakei (strain 23K) (Lactobacillus sakei subsp. sakei) protein is Methylglyoxal synthase.